Here is a 466-residue protein sequence, read N- to C-terminus: ATP synthase subunit beta (466 aa).

152 to 159 (GGAGVGKT) lines the ATP pocket.

It belongs to the ATPase alpha/beta chains family. F-type ATPases have 2 components, CF(1) - the catalytic core - and CF(0) - the membrane proton channel. CF(1) has five subunits: alpha(3), beta(3), gamma(1), delta(1), epsilon(1). CF(0) has three main subunits: a(1), b(2) and c(9-12). The alpha and beta chains form an alternating ring which encloses part of the gamma chain. CF(1) is attached to CF(0) by a central stalk formed by the gamma and epsilon chains, while a peripheral stalk is formed by the delta and b chains.

It localises to the cell inner membrane. It carries out the reaction ATP + H2O + 4 H(+)(in) = ADP + phosphate + 5 H(+)(out). Produces ATP from ADP in the presence of a proton gradient across the membrane. The catalytic sites are hosted primarily by the beta subunits. This Helicobacter acinonychis (strain Sheeba) protein is ATP synthase subunit beta.